Reading from the N-terminus, the 91-residue chain is MPRSLKKGPFIDHHLLSKVEAAAEKNDRRPIKTWSRRSMILPNMVGLTLAVHNGRQHVPVLVNEEMVGHKLGEFAVTRLYRGHVADKKAKR.

The protein belongs to the universal ribosomal protein uS19 family.

Functionally, protein S19 forms a complex with S13 that binds strongly to the 16S ribosomal RNA. The polypeptide is Small ribosomal subunit protein uS19 (Saccharophagus degradans (strain 2-40 / ATCC 43961 / DSM 17024)).